The following is a 503-amino-acid chain: ATP synthase subunit alpha (503 aa).

169–176 (GDRQTGKT) lines the ATP pocket.

It belongs to the ATPase alpha/beta chains family. As to quaternary structure, F-type ATPases have 2 components, CF(1) - the catalytic core - and CF(0) - the membrane proton channel. CF(1) has five subunits: alpha(3), beta(3), gamma(1), delta(1), epsilon(1). CF(0) has three main subunits: a(1), b(2) and c(9-12). The alpha and beta chains form an alternating ring which encloses part of the gamma chain. CF(1) is attached to CF(0) by a central stalk formed by the gamma and epsilon chains, while a peripheral stalk is formed by the delta and b chains.

The protein resides in the cell membrane. The enzyme catalyses ATP + H2O + 4 H(+)(in) = ADP + phosphate + 5 H(+)(out). Its function is as follows. Produces ATP from ADP in the presence of a proton gradient across the membrane. The alpha chain is a regulatory subunit. In Staphylococcus epidermidis (strain ATCC 35984 / DSM 28319 / BCRC 17069 / CCUG 31568 / BM 3577 / RP62A), this protein is ATP synthase subunit alpha.